Consider the following 303-residue polypeptide: Glutamyl-Q tRNA(Asp) synthetase (303 aa).

L-glutamate-binding positions include 16-20 (RFAPS) and E52. Residues 19-29 (PSPSGPLHFGS) carry the 'HIGH' region motif. Residues C108, C110, Y122, and C126 each coordinate Zn(2+). Residues Y177 and R195 each coordinate L-glutamate. The 'KMSKS' region signature appears at 233–237 (KLSKQ). Residue K236 participates in ATP binding.

It belongs to the class-I aminoacyl-tRNA synthetase family. GluQ subfamily. Requires Zn(2+) as cofactor.

In terms of biological role, catalyzes the tRNA-independent activation of glutamate in presence of ATP and the subsequent transfer of glutamate onto a tRNA(Asp). Glutamate is transferred on the 2-amino-5-(4,5-dihydroxy-2-cyclopenten-1-yl) moiety of the queuosine in the wobble position of the QUC anticodon. This is Glutamyl-Q tRNA(Asp) synthetase from Vibrio vulnificus (strain YJ016).